The primary structure comprises 151 residues: Ribosomal RNA large subunit methyltransferase H (151 aa).

Residues glycine 100 and 119-124 (LSKMTF) each bind S-adenosyl-L-methionine.

Belongs to the RNA methyltransferase RlmH family. Homodimer.

The protein resides in the cytoplasm. It carries out the reaction pseudouridine(1915) in 23S rRNA + S-adenosyl-L-methionine = N(3)-methylpseudouridine(1915) in 23S rRNA + S-adenosyl-L-homocysteine + H(+). In terms of biological role, specifically methylates the pseudouridine at position 1915 (m3Psi1915) in 23S rRNA. The chain is Ribosomal RNA large subunit methyltransferase H from Thermotoga maritima (strain ATCC 43589 / DSM 3109 / JCM 10099 / NBRC 100826 / MSB8).